A 362-amino-acid polypeptide reads, in one-letter code: tRNA/tmRNA (uracil-C(5))-methyltransferase (362 aa).

Residues Gln-186, Tyr-214, Asn-219, Glu-235, and Asp-295 each contribute to the S-adenosyl-L-methionine site. Catalysis depends on Cys-320, which acts as the Nucleophile. Catalysis depends on Glu-354, which acts as the Proton acceptor.

It belongs to the class I-like SAM-binding methyltransferase superfamily. RNA M5U methyltransferase family. TrmA subfamily.

It carries out the reaction uridine(54) in tRNA + S-adenosyl-L-methionine = 5-methyluridine(54) in tRNA + S-adenosyl-L-homocysteine + H(+). The enzyme catalyses uridine(341) in tmRNA + S-adenosyl-L-methionine = 5-methyluridine(341) in tmRNA + S-adenosyl-L-homocysteine + H(+). Functionally, dual-specificity methyltransferase that catalyzes the formation of 5-methyluridine at position 54 (m5U54) in all tRNAs, and that of position 341 (m5U341) in tmRNA (transfer-mRNA). This Stutzerimonas stutzeri (strain A1501) (Pseudomonas stutzeri) protein is tRNA/tmRNA (uracil-C(5))-methyltransferase.